A 485-amino-acid chain; its full sequence is Alpha-amylase (485 aa).

Residues 1 to 18 (MQHLSILLVVLGSSIAFA) form the signal peptide. Gln-19 is subject to Pyrrolidone carboxylic acid. Cysteines 46 and 102 form a disulfide. Residues Asn-116, Arg-163, and Asp-172 each contribute to the Ca(2+) site. Cys-152 and Cys-165 are disulfide-bonded. Arg-200 provides a ligand contact to chloride. The active-site Nucleophile is Asp-202. His-206 is a binding site for Ca(2+). Glu-238 functions as the Proton donor in the catalytic mechanism. Chloride is bound at residue Asn-301. Cys-369 and Cys-375 form a disulfide bridge. N-linked (GlcNAc...) asparagine glycans are attached at residues Asn-423 and Asn-449. A disulfide bridge links Cys-440 with Cys-452.

This sequence belongs to the glycosyl hydrolase 13 family. As to quaternary structure, monomer. Ca(2+) serves as cofactor. Requires chloride as cofactor.

It catalyses the reaction Endohydrolysis of (1-&gt;4)-alpha-D-glucosidic linkages in polysaccharides containing three or more (1-&gt;4)-alpha-linked D-glucose units.. Functionally, involved in the digestion of starch. The chain is Alpha-amylase from Hypothenemus hampei (Coffee berry borer).